We begin with the raw amino-acid sequence, 294 residues long: PAK4-inhibitor INKA2 (294 aa).

Disordered stretches follow at residues I50 to M143, P170 to G198, and L223 to T290. Residues S85–K99 are compositionally biased toward polar residues. The segment at E134–E177 is inka box. A compositionally biased stretch (basic and acidic residues) spans E171–G198. The segment covering R241–G253 has biased composition (basic residues).

It belongs to the INKA family. As to quaternary structure, interacts with PAK4.

The protein resides in the nucleus. Inhibitor of the serine/threonine-protein kinase PAK4. Acts by binding PAK4 in a substrate-like manner, inhibiting the protein kinase activity. The chain is PAK4-inhibitor INKA2 from Bos taurus (Bovine).